The sequence spans 416 residues: Neurotensin receptor type 2 (416 aa).

Residues 1 to 32 (METSSPWPPRPSPSAGLSLEARLGVDTRLWAK) lie on the Extracellular side of the membrane. Residues 33–55 (VLFTALYSLIFAFGTAGNALSVH) form a helical membrane-spanning segment. Topologically, residues 56-64 (VVLKARAGR) are cytoplasmic. Residues 65-87 (PGRLRYHVLSLALSALLLLLVSM) form a helical membrane-spanning segment. At 88–109 (PMELYNFVWSHYPWVFGDLGCR) the chain is on the extracellular side. Cys-108 and Cys-194 are oxidised to a cystine. A helical transmembrane segment spans residues 110-131 (GYYFVRELCAYATVLSVASLSA). At 132 to 154 (ERCLAVCQPLRARRLLTPRRTRR) the chain is on the cytoplasmic side. Residues 155–176 (LLSLVWVASLGLALPMAVIMGQ) form a helical membrane-spanning segment. At 177-216 (KHEVESADGEPEPASRVCTVLVSRATLQVFIQVNVLVSFA) the chain is on the extracellular side. A helical transmembrane segment spans residues 217–237 (LPLALTAFLNGITVNHLMALY). Residues 238–297 (SQVPSASAQVSSIPSRLELLSEEGLLGFITWRKTLSLGVQASLVRHKDASQIRSLQHSAQ) are Cytoplasmic-facing. Residues 298-318 (VLRAIVAVYVICWLPYHARRL) traverse the membrane as a helical segment. Residues 319-337 (MYCYIPDDGWTNELYDFYH) lie on the Extracellular side of the membrane. The helical transmembrane segment at 338-358 (YFYMVTNTLFYVSSAVTPILY) threads the bilayer. Over 359 to 416 (NAVSSSFRKLFLESLGSLCGEQHSLVPLPQEAPESTTSTYSFRLWGSPRNPSLGEIQV) the chain is Cytoplasmic. Cys-377 carries S-palmitoyl cysteine lipidation. Ser-410 bears the Phosphoserine mark.

The protein belongs to the G-protein coupled receptor 1 family. Neurotensin receptor subfamily. NTSR2 sub-subfamily. In terms of tissue distribution, abundant in cortex and hypothalamus, and lower levels seen in the heart and intestine.

Its subcellular location is the cell membrane. Its function is as follows. Receptor for the tridecapeptide neurotensin. It is associated with G proteins that activate a phosphatidylinositol-calcium second messenger system. This chain is Neurotensin receptor type 2 (Ntsr2), found in Rattus norvegicus (Rat).